The following is a 41-amino-acid chain: Cytochrome b559 subunit beta (41 aa).

A helical membrane pass occupies residues 16 to 32 (WLAIHALAVPTVFFLGS). Heme is bound at residue His20.

Belongs to the PsbE/PsbF family. Heterodimer of an alpha subunit and a beta subunit. PSII is composed of 1 copy each of membrane proteins PsbA, PsbB, PsbC, PsbD, PsbE, PsbF, PsbH, PsbI, PsbJ, PsbK, PsbL, PsbM, PsbT, PsbX, PsbY, PsbZ, Psb30/Ycf12, at least 3 peripheral proteins of the oxygen-evolving complex and a large number of cofactors. It forms dimeric complexes. Heme b is required as a cofactor.

It is found in the plastid. It localises to the chloroplast thylakoid membrane. Its function is as follows. This b-type cytochrome is tightly associated with the reaction center of photosystem II (PSII). PSII is a light-driven water:plastoquinone oxidoreductase that uses light energy to abstract electrons from H(2)O, generating O(2) and a proton gradient subsequently used for ATP formation. It consists of a core antenna complex that captures photons, and an electron transfer chain that converts photonic excitation into a charge separation. This chain is Cytochrome b559 subunit beta, found in Oltmannsiellopsis viridis (Marine flagellate).